The sequence spans 211 residues: Arginine exporter protein ArgO (211 aa).

6 consecutive transmembrane segments (helical) span residues 1–21 (MFTY…PLGP), 37–57 (LMIA…GIFG), 68–88 (LLAI…FGAL), 111–131 (IIIT…DTFV), 147–167 (WFAL…ALLA), and 182–202 (IINI…AKEG).

It belongs to the LysE/ArgO transporter (TC 2.A.75) family.

It localises to the cell inner membrane. The catalysed reaction is L-arginine(in) = L-arginine(out). Involved in the export of arginine. Important to control the intracellular level of arginine and the correct balance between arginine and lysine. In Klebsiella pneumoniae (strain 342), this protein is Arginine exporter protein ArgO.